The sequence spans 286 residues: ATP synthase gamma chain (286 aa).

It belongs to the ATPase gamma chain family. F-type ATPases have 2 components, CF(1) - the catalytic core - and CF(0) - the membrane proton channel. CF(1) has five subunits: alpha(3), beta(3), gamma(1), delta(1), epsilon(1). CF(0) has three main subunits: a, b and c.

Its subcellular location is the cell inner membrane. In terms of biological role, produces ATP from ADP in the presence of a proton gradient across the membrane. The gamma chain is believed to be important in regulating ATPase activity and the flow of protons through the CF(0) complex. The polypeptide is ATP synthase gamma chain (Pseudomonas entomophila (strain L48)).